The primary structure comprises 488 residues: 3-octaprenyl-4-hydroxybenzoate carboxy-lyase (488 aa).

Asn-172 serves as a coordination point for Mn(2+). Prenylated FMN is bound by residues 175 to 177 (IYR), 189 to 191 (RWL), and 194 to 195 (RG). Glu-238 lines the Mn(2+) pocket. The active-site Proton donor is the Asp-287.

The protein belongs to the UbiD family. Homohexamer. Prenylated FMN serves as cofactor. The cofactor is Mn(2+).

It localises to the cell membrane. It catalyses the reaction a 4-hydroxy-3-(all-trans-polyprenyl)benzoate + H(+) = a 2-(all-trans-polyprenyl)phenol + CO2. The protein operates within cofactor biosynthesis; ubiquinone biosynthesis. Functionally, catalyzes the decarboxylation of 3-octaprenyl-4-hydroxy benzoate to 2-octaprenylphenol, an intermediate step in ubiquinone biosynthesis. The polypeptide is 3-octaprenyl-4-hydroxybenzoate carboxy-lyase (Pseudomonas putida (strain GB-1)).